The primary structure comprises 131 residues: Small ribosomal subunit protein uS8 (131 aa).

Residues 1–27 (MSMTDPVADMLTRIRNGQRASKNEVSM) are disordered.

Belongs to the universal ribosomal protein uS8 family. As to quaternary structure, part of the 30S ribosomal subunit. Contacts proteins S5 and S12.

One of the primary rRNA binding proteins, it binds directly to 16S rRNA central domain where it helps coordinate assembly of the platform of the 30S subunit. The chain is Small ribosomal subunit protein uS8 from Thioalkalivibrio sulfidiphilus (strain HL-EbGR7).